The primary structure comprises 119 residues: NAD(P)H-quinone oxidoreductase subunit M (119 aa).

This sequence belongs to the complex I NdhM subunit family. As to quaternary structure, NDH-1 can be composed of about 15 different subunits; different subcomplexes with different compositions have been identified which probably have different functions.

It localises to the cellular thylakoid membrane. The enzyme catalyses a plastoquinone + NADH + (n+1) H(+)(in) = a plastoquinol + NAD(+) + n H(+)(out). It catalyses the reaction a plastoquinone + NADPH + (n+1) H(+)(in) = a plastoquinol + NADP(+) + n H(+)(out). NDH-1 shuttles electrons from an unknown electron donor, via FMN and iron-sulfur (Fe-S) centers, to quinones in the respiratory and/or the photosynthetic chain. The immediate electron acceptor for the enzyme in this species is believed to be plastoquinone. Couples the redox reaction to proton translocation, and thus conserves the redox energy in a proton gradient. Cyanobacterial NDH-1 also plays a role in inorganic carbon-concentration. This chain is NAD(P)H-quinone oxidoreductase subunit M, found in Gloeothece citriformis (strain PCC 7424) (Cyanothece sp. (strain PCC 7424)).